The chain runs to 212 residues: 3,4-dihydroxy-2-butanone 4-phosphate synthase (212 aa).

Residues Arg37 to Glu38, Asp42, Arg150 to Thr154, and Glu174 each bind D-ribulose 5-phosphate. Glu38 contacts Mg(2+). His153 provides a ligand contact to Mg(2+).

The protein belongs to the DHBP synthase family. Homodimer. Mg(2+) serves as cofactor. It depends on Mn(2+) as a cofactor.

It catalyses the reaction D-ribulose 5-phosphate = (2S)-2-hydroxy-3-oxobutyl phosphate + formate + H(+). It participates in cofactor biosynthesis; riboflavin biosynthesis; 2-hydroxy-3-oxobutyl phosphate from D-ribulose 5-phosphate: step 1/1. In terms of biological role, catalyzes the conversion of D-ribulose 5-phosphate to formate and 3,4-dihydroxy-2-butanone 4-phosphate. In Histophilus somni (strain 129Pt) (Haemophilus somnus), this protein is 3,4-dihydroxy-2-butanone 4-phosphate synthase.